Here is a 273-residue protein sequence, read N- to C-terminus: SPRY domain-containing SOCS box protein 1 (273 aa).

Tyr-31 carries the post-translational modification Phosphotyrosine; by MET. In terms of domain architecture, B30.2/SPRY spans 33–231 (KPTRLDLLLD…IRMRYLNGLD (199 aa)). An SOCS box domain is found at 232–273 (PEPLPLMDLCRRSVRLALGRERLGEIHTLPLPASLKAYLLYQ).

It belongs to the SPSB family. As to quaternary structure, component of the probable ECS(SPSB1) E3 ubiquitin-protein ligase complex which contains CUL5, RNF7/RBX2, Elongin BC complex and SPSB1. Interacts with CUL5, RNF7, ELOB and ELOC. Directly interacts with MET tyrosine kinase domain in the presence and in the absence of HGF, however HGF treatment has a positive effect on this interaction. When phosphorylated, interacts with RASA1 without affecting its stability. Interacts (via B30.2/SPRY domain) with PAWR; this interaction is direct and occurs in association with the Elongin BC complex. Interacts with NOS2. Interacts with EPHB2.

It localises to the cytoplasm. The protein localises to the cytosol. It participates in protein modification; protein ubiquitination. Functionally, substrate recognition component of a SCF-like ECS (Elongin BC-CUL2/5-SOCS-box protein) E3 ubiquitin-protein ligase complex which mediates the ubiquitination and subsequent proteasomal degradation of target proteins. Negatively regulates nitric oxide (NO) production and limits cellular toxicity in activated macrophages by mediating the ubiquitination and proteasomal degradation of NOS2. Acts as a bridge which links NOS2 with the ECS E3 ubiquitin ligase complex components ELOC and CUL5. The protein is SPRY domain-containing SOCS box protein 1 (SPSB1) of Homo sapiens (Human).